We begin with the raw amino-acid sequence, 248 residues long: mRNA-decapping protein OPG122 (248 aa).

The 183-residue stretch at 45 to 227 (HKRVSVSAIL…IAKYALDTAK (183 aa)) folds into the Nudix hydrolase domain. The Nudix box motif lies at 125–147 (GGIPKRGENVPECLSREIKEEVN).

The protein belongs to the Nudix hydrolase family. As to quaternary structure, interacts with the late transcription elongation factor VLTF-4/OPG110. Interacts with the late transcription factors VLTF-1. Requires Mg(2+) as cofactor. It depends on Mn(2+) as a cofactor.

The protein localises to the host mitochondrion. Acts with RNA polymerase to initiate transcription from late gene promoters. The protein is mRNA-decapping protein OPG122 (OPG122) of Cynomys gunnisoni (Gunnison's prairie dog).